Here is a 147-residue protein sequence, read N- to C-terminus: Prefoldin subunit alpha (147 aa).

Belongs to the prefoldin alpha subunit family. Heterohexamer of two alpha and four beta subunits.

Its subcellular location is the cytoplasm. Functionally, molecular chaperone capable of stabilizing a range of proteins. Seems to fulfill an ATP-independent, HSP70-like function in archaeal de novo protein folding. This Saccharolobus islandicus (strain L.S.2.15 / Lassen #1) (Sulfolobus islandicus) protein is Prefoldin subunit alpha.